A 290-amino-acid polypeptide reads, in one-letter code: Enoyl-CoA hydratase, mitochondrial (290 aa).

A mitochondrion-targeting transit peptide spans 1–27 (MATLRVLLSCVRGPLRPPVRCPAWRPF). Thr46 is modified (phosphothreonine). Residue 98–101 (ADIK) coordinates substrate. Lys101 carries the N6-acetyllysine; alternate modification. Lys101 is modified (N6-succinyllysine; alternate). Ser114 is modified (phosphoserine). An N6-acetyllysine; alternate modification is found at Lys115. Residue Lys115 is modified to N6-succinyllysine; alternate. Lys118 is modified (N6-acetyllysine). Residue Gly141 coordinates substrate. Lys204 is subject to N6-succinyllysine. Residue Lys211 is modified to N6-acetyllysine.

It belongs to the enoyl-CoA hydratase/isomerase family. In terms of assembly, homohexamer; dimer of trimers.

It is found in the mitochondrion matrix. The catalysed reaction is a (3S)-3-hydroxyacyl-CoA = a (2E)-enoyl-CoA + H2O. The enzyme catalyses a (3E)-enoyl-CoA = a 4-saturated (2E)-enoyl-CoA. It carries out the reaction (3E)-hexenoyl-CoA = (2E)-hexenoyl-CoA. It catalyses the reaction (3S)-3-hydroxybutanoyl-CoA = (2E)-butenoyl-CoA + H2O. The catalysed reaction is 3-hydroxyisovaleryl-CoA = 3-methylbut-2-enoyl-CoA + H2O. The enzyme catalyses 3-hydroxypropanoyl-CoA = acryloyl-CoA + H2O. It carries out the reaction 3-hydroxybutanoyl-CoA = (2E)-butenoyl-CoA + H2O. It catalyses the reaction 2-methylpropenoyl-CoA + H2O = (S)-3-hydroxyisobutanoyl-CoA. The catalysed reaction is (3S)-hydroxyhexanoyl-CoA = (2E)-hexenoyl-CoA + H2O. The enzyme catalyses (3S)-hydroxydecanoyl-CoA = (2E)-decenoyl-CoA + H2O. It participates in lipid metabolism; fatty acid beta-oxidation. Converts unsaturated trans-2-enoyl-CoA species ((2E)-enoyl-CoA) to the corresponding (3S)-3-hydroxyacyl-CoA species through addition of a water molecule to the double bond. Catalyzes the hydration of medium- and short-chained fatty enoyl-CoA thioesters from 4 carbons long (C4) up to C16. Has high substrate specificity for crotonyl-CoA ((2E)-butenoyl-CoA) and moderate specificity for acryloyl-CoA, 3-methylcrotonyl-CoA (3-methyl-(2E)-butenoyl-CoA) and methacrylyl-CoA ((2E)-2-methylpropenoyl-CoA). Can bind tiglyl-CoA (2-methylcrotonoyl-CoA), but hydrates only a small amount of this substrate. Plays a key role in the beta-oxidation spiral of short- and medium-chain fatty acid oxidation. At a lower rate than the hydratase reaction, catalyzes the isomerase reaction of trans-3-enoyl-CoA species (such as (3E)-hexenoyl-CoA) to trans-2-enoyl-CoA species (such as (2E)-hexenoyl-CoA), which are subsequently hydrated to 3(S)-3-hydroxyacyl-CoA species (such as (3S)-hydroxyhexanoyl-CoA). The chain is Enoyl-CoA hydratase, mitochondrial (ECHS1) from Pongo abelii (Sumatran orangutan).